Reading from the N-terminus, the 319-residue chain is Bidirectional sugar transporter SWEET15 (319 aa).

Residues Met1–Thr10 lie on the Extracellular side of the membrane. The chain crosses the membrane as a helical span at residues Trp11 to Leu31. Residues Phe13–Ser99 enclose the MtN3/slv 1 domain. Over Pro32 to Pro50 the chain is Cytoplasmic. A helical membrane pass occupies residues Tyr51–Ala71. Glu72 is a topological domain (extracellular). Residues Leu73–Leu93 traverse the membrane as a helical segment. The Cytoplasmic portion of the chain corresponds to Ala94–Lys106. Residues Met107–Ser127 form a helical membrane-spanning segment. Residues Arg128 to His134 are Extracellular-facing. A helical membrane pass occupies residues Val135 to Ile155. Residues Val135 to Lys219 enclose the MtN3/slv 2 domain. Topologically, residues Arg156 to Met167 are cytoplasmic. A helical transmembrane segment spans residues Pro168–Leu188. Over Lys189 to Asp191 the chain is Extracellular. Residues Val192–Tyr212 form a helical membrane-spanning segment. The Cytoplasmic portion of the chain corresponds to Met213 to Val319.

The protein belongs to the SWEET sugar transporter family. As to quaternary structure, forms homooligomers and/or heterooligomers.

It is found in the cell membrane. Mediates both low-affinity uptake and efflux of sugar across the plasma membrane. This Oryza sativa subsp. indica (Rice) protein is Bidirectional sugar transporter SWEET15 (SWEET15).